Here is a 213-residue protein sequence, read N- to C-terminus: Imidazole glycerol phosphate synthase subunit HisH (213 aa).

A Glutamine amidotransferase type-1 domain is found at serine 4–proline 213. The active-site Nucleophile is the cysteine 83. Active-site residues include histidine 193 and glutamate 195.

In terms of assembly, heterodimer of HisH and HisF.

It localises to the cytoplasm. It carries out the reaction 5-[(5-phospho-1-deoxy-D-ribulos-1-ylimino)methylamino]-1-(5-phospho-beta-D-ribosyl)imidazole-4-carboxamide + L-glutamine = D-erythro-1-(imidazol-4-yl)glycerol 3-phosphate + 5-amino-1-(5-phospho-beta-D-ribosyl)imidazole-4-carboxamide + L-glutamate + H(+). It catalyses the reaction L-glutamine + H2O = L-glutamate + NH4(+). It participates in amino-acid biosynthesis; L-histidine biosynthesis; L-histidine from 5-phospho-alpha-D-ribose 1-diphosphate: step 5/9. Its function is as follows. IGPS catalyzes the conversion of PRFAR and glutamine to IGP, AICAR and glutamate. The HisH subunit catalyzes the hydrolysis of glutamine to glutamate and ammonia as part of the synthesis of IGP and AICAR. The resulting ammonia molecule is channeled to the active site of HisF. This chain is Imidazole glycerol phosphate synthase subunit HisH, found in Burkholderia multivorans (strain ATCC 17616 / 249).